The chain runs to 341 residues: Anthranilate phosphoribosyltransferase (341 aa).

Residues Gly79, 82–83 (GD), Thr87, 89–92 (NIST), 107–115 (KHGNRAVSS), and Ser119 each bind 5-phospho-alpha-D-ribose 1-diphosphate. Position 79 (Gly79) interacts with anthranilate. Ser91 serves as a coordination point for Mg(2+). Asn110 is an anthranilate binding site. Anthranilate is bound at residue Arg165. Mg(2+) contacts are provided by Asp224 and Glu225.

This sequence belongs to the anthranilate phosphoribosyltransferase family. As to quaternary structure, homodimer. The cofactor is Mg(2+).

It catalyses the reaction N-(5-phospho-beta-D-ribosyl)anthranilate + diphosphate = 5-phospho-alpha-D-ribose 1-diphosphate + anthranilate. It functions in the pathway amino-acid biosynthesis; L-tryptophan biosynthesis; L-tryptophan from chorismate: step 2/5. In terms of biological role, catalyzes the transfer of the phosphoribosyl group of 5-phosphorylribose-1-pyrophosphate (PRPP) to anthranilate to yield N-(5'-phosphoribosyl)-anthranilate (PRA). This is Anthranilate phosphoribosyltransferase from Bacillus cereus (strain ZK / E33L).